We begin with the raw amino-acid sequence, 784 residues long: Probable leucine-rich repeat receptor-like protein kinase IMK3 (784 aa).

An N-terminal signal peptide occupies residues 1–48 (MEFITQNQAITSLSMINTDIDQPKASLRSRFLLHLIICLLFFVPPCSS). The Extracellular portion of the chain corresponds to 49–409 (QAWDGVVITQ…PSHRNLSTKD (361 aa)). N-linked (GlcNAc...) asparagine glycosylation is present at Asn-82. LRR repeat units lie at residues 126–148 (ALRK…LGLI), 150–172 (NLRG…LGVS), 174–197 (FLQT…ADSS), 198–220 (KLLR…LSRS), 222–242 (SLQF…DTWG), 247–268 (NLRV…SLCN), 271–294 (QLQD…SKLT), 295–317 (KLRK…LGNI), 319–342 (SLIH…SDLE), and 343–365 (SLNF…LSQK). 3 N-linked (GlcNAc...) asparagine glycosylation sites follow: Asn-203, Asn-232, and Asn-268. Asn-316 carries N-linked (GlcNAc...) asparagine glycosylation. 4 N-linked (GlcNAc...) asparagine glycosylation sites follow: Asn-348, Asn-353, Asn-367, and Asn-404. Residues 410-430 (IILIASGALLIVMLILVCVLC) traverse the membrane as a helical segment. Residues 431–784 (CLLRKKANET…VPEASASTSQ (354 aa)) lie on the Cytoplasmic side of the membrane. Residues 441-467 (KAKGGEAGPGAVAAKTEKGGEAEAGGE) form a disordered region. The Protein kinase domain occupies 488 to 773 (CATAEIMGKS…TTATTSEPLI (286 aa)). ATP contacts are provided by residues 494–502 (MGKSTYGTV) and Lys-516. The tract at residues 760 to 784 (RPEETTATTSEPLIDVPEASASTSQ) is disordered.

Belongs to the protein kinase superfamily. Ser/Thr protein kinase family. In terms of assembly, interacts with AGL24. Post-translationally, autophosphorylated. In terms of tissue distribution, expressed in meristems, including roots, vegetative, inflorescence and floral meristems, and in embryos.

It is found in the cell membrane. It carries out the reaction L-seryl-[protein] + ATP = O-phospho-L-seryl-[protein] + ADP + H(+). The enzyme catalyses L-threonyl-[protein] + ATP = O-phospho-L-threonyl-[protein] + ADP + H(+). Functionally, can phosphorylate AGL24. The chain is Probable leucine-rich repeat receptor-like protein kinase IMK3 (IMK3) from Arabidopsis thaliana (Mouse-ear cress).